A 215-amino-acid chain; its full sequence is Probable phosphoglycerate mutase GpmB (215 aa).

Substrate contacts are provided by residues 8–15, 21–22, Arg-58, Arg-60, 82–85, 104–105, and 151–152; these read RHGETQWN, QG, ELNM, RR, and GI. The active-site Tele-phosphohistidine intermediate is His-9. The Proton donor/acceptor role is filled by Glu-82.

The protein belongs to the phosphoglycerate mutase family. GpmB subfamily.

It catalyses the reaction (2R)-2-phosphoglycerate = (2R)-3-phosphoglycerate. It functions in the pathway carbohydrate degradation; glycolysis; pyruvate from D-glyceraldehyde 3-phosphate: step 3/5. The polypeptide is Probable phosphoglycerate mutase GpmB (Escherichia fergusonii (strain ATCC 35469 / DSM 13698 / CCUG 18766 / IAM 14443 / JCM 21226 / LMG 7866 / NBRC 102419 / NCTC 12128 / CDC 0568-73)).